A 264-amino-acid polypeptide reads, in one-letter code: S-adenosylmethionine decarboxylase proenzyme (264 aa).

Residue Ser-113 is the Schiff-base intermediate with substrate; via pyruvic acid of the active site. The residue at position 113 (Ser-113) is a Pyruvic acid (Ser); by autocatalysis. The active-site Proton acceptor; for processing activity is the His-118. Cys-141 (proton donor; for catalytic activity) is an active-site residue.

It belongs to the prokaryotic AdoMetDC family. Type 2 subfamily. In terms of assembly, heterooctamer of four alpha and four beta chains arranged as a tetramer of alpha/beta heterodimers. Pyruvate serves as cofactor. Is synthesized initially as an inactive proenzyme. Formation of the active enzyme involves a self-maturation process in which the active site pyruvoyl group is generated from an internal serine residue via an autocatalytic post-translational modification. Two non-identical subunits are generated from the proenzyme in this reaction, and the pyruvate is formed at the N-terminus of the alpha chain, which is derived from the carboxyl end of the proenzyme. The post-translation cleavage follows an unusual pathway, termed non-hydrolytic serinolysis, in which the side chain hydroxyl group of the serine supplies its oxygen atom to form the C-terminus of the beta chain, while the remainder of the serine residue undergoes an oxidative deamination to produce ammonia and the pyruvoyl group blocking the N-terminus of the alpha chain.

It carries out the reaction S-adenosyl-L-methionine + H(+) = S-adenosyl 3-(methylsulfanyl)propylamine + CO2. It participates in amine and polyamine biosynthesis; S-adenosylmethioninamine biosynthesis; S-adenosylmethioninamine from S-adenosyl-L-methionine: step 1/1. Functionally, catalyzes the decarboxylation of S-adenosylmethionine to S-adenosylmethioninamine (dcAdoMet), the propylamine donor required for the synthesis of the polyamines spermine and spermidine from the diamine putrescine. This Pseudomonas aeruginosa (strain UCBPP-PA14) protein is S-adenosylmethionine decarboxylase proenzyme.